The primary structure comprises 225 residues: Insulin-induced gene 2 protein (225 aa).

Over 1-28 (MAEGETESPRPKKRGPYISSVTSQSVNV) the chain is Cytoplasmic. Residues 29–51 (VIRGVVLFFIGVFLALVLNLLQI) traverse the membrane as a helical segment. The Lumenal segment spans residues 52–70 (QRNVTLFPPDVITSIFSSA). A helical transmembrane segment spans residues 71-88 (WWVPPCCGTASAVIGLLY). Residues 89–103 (PCIDRHLGEPHKFKR) are Cytoplasmic-facing. Residues 104 to 126 (EWSSVMRCVAVFVGINHASAKVD) traverse the membrane as a helical segment. Residues 127–129 (FDN) lie on the Lumenal side of the membrane. A helical transmembrane segment spans residues 130–148 (NFQFSLTLAALSVGLWWTF). Topologically, residues 149 to 153 (DRSRS) are cytoplasmic. Serine 151 is modified (phosphoserine). Residues 154 to 175 (GFGLGVGIAFLATVVTQLLVYN) form a helical membrane-spanning segment. The Lumenal segment spans residues 176–189 (GVYQYTSPDFLYVR). A helical membrane pass occupies residues 190–207 (SWLPCIFFAGGITMGNIG). The Cytoplasmic segment spans residues 208–225 (RQLAMYECKVIAEKSHQE). Cysteine 215 carries the cysteine sulfenic acid (-SOH); alternate modification. Residue cysteine 215 forms a Glycyl cysteine thioester (Cys-Gly) (interchain with G-Cter in ubiquitin); alternate linkage. The KxHxx motif lies at 219–225 (AEKSHQE).

The protein belongs to the INSIG family. In terms of assembly, interacts with SCAP; interaction is direct and only takes place in the presence of sterols; it prevents interaction between SCAP and the coat protein complex II (COPII). Associates with the SCAP-SREBP complex (composed of SCAP and SREBF1/SREBP1 or SREBF2/SREBP2); association is mediated via its interaction with SCAP and only takes place in the presence of sterols. Interacts with RNF139. Interacts with RNF145. Phosphorylation at Ser-151 by PCK1 reduces binding to oxysterol, disrupting the interaction between INSIG2 and SCAP, thereby promoting nuclear translocation of SREBP proteins (SREBF1/SREBP1 or SREBF2/SREBP2) and subsequent transcription of downstream lipogenesis-related genes. Post-translationally, polyubiquitinated by AMFR/gp78 at Cys-215 in some tissues such as adipose tissues, undifferentiated myoblasts and liver, leading to its degradation. In differentiated myotubes, Cys-215 oxidation prevents ubiquitination at the same site, resulting in protein stabilization. In terms of processing, oxidized at Cys-215 in differentiated myotubes, preventing ubiquitination at the same site, and resulting in protein stabilization.

It is found in the endoplasmic reticulum membrane. In terms of biological role, oxysterol-binding protein that mediates feedback control of cholesterol synthesis by controlling both endoplasmic reticulum to Golgi transport of SCAP and degradation of HMGCR. Acts as a negative regulator of cholesterol biosynthesis by mediating the retention of the SCAP-SREBP complex in the endoplasmic reticulum, thereby blocking the processing of sterol regulatory element-binding proteins (SREBPs) SREBF1/SREBP1 and SREBF2/SREBP2. Binds oxysterol, including 22-hydroxycholesterol, 24-hydroxycholesterol, 25-hydroxycholesterol and 27-hydroxycholesterol, regulating interaction with SCAP and retention of the SCAP-SREBP complex in the endoplasmic reticulum. In presence of oxysterol, interacts with SCAP, retaining the SCAP-SREBP complex in the endoplasmic reticulum, thereby preventing SCAP from escorting SREBF1/SREBP1 and SREBF2/SREBP2 to the Golgi. Sterol deprivation or phosphorylation by PCK1 reduce oxysterol-binding, disrupting the interaction between INSIG2 and SCAP, thereby promoting Golgi transport of the SCAP-SREBP complex, followed by processing and nuclear translocation of SREBF1/SREBP1 and SREBF2/SREBP2. Also regulates cholesterol synthesis by regulating degradation of HMGCR: initiates the sterol-mediated ubiquitin-mediated endoplasmic reticulum-associated degradation (ERAD) of HMGCR via recruitment of the reductase to the ubiquitin ligase RNF139. In Rattus norvegicus (Rat), this protein is Insulin-induced gene 2 protein.